A 416-amino-acid polypeptide reads, in one-letter code: Choline/ethanolaminephosphotransferase 1 (416 aa).

The segment at 1 to 20 (MSGHRSTRKRCGDSHPESPV) is disordered. Ser18 is modified (phosphoserine). Thr40 bears the Phosphothreonine mark. Asn86 lines the CDP-choline pocket. The next 2 membrane-spanning stretches (helical) occupy residues 89–108 (TIIG…FYCP) and 116–133 (LWAY…QSLD). Position 133 (Asp133) interacts with Mg(2+). N-linked (GlcNAc...) asparagine glycosylation is present at Asn144. Glu151 serves as a coordination point for CDP-choline. Asp154 is a Mg(2+) binding site. His155 serves as the catalytic Proton acceptor. The next 8 membrane-spanning stretches (helical) occupy residues 156–176 (GCDS…VQLG), 180–199 (DWMF…AHWQ), 210–230 (IIDV…AVIG), 246–267 (MKLF…NYFR), 286–306 (VLSP…IYKK), 315–334 (HPCL…TNKL), 349–363 (TAFI…DQYF), and 368–388 (DEYI…IRYC). Asp158 is a Mg(2+) binding site.

The protein belongs to the CDP-alcohol phosphatidyltransferase class-I family. In terms of assembly, homodimer. The cofactor is Mg(2+). Mn(2+) serves as cofactor.

It localises to the endoplasmic reticulum membrane. Its subcellular location is the nucleus membrane. The catalysed reaction is CDP-ethanolamine + a 1,2-diacyl-sn-glycerol = a 1,2-diacyl-sn-glycero-3-phosphoethanolamine + CMP + H(+). It carries out the reaction CDP-choline + a 1,2-diacyl-sn-glycerol = a 1,2-diacyl-sn-glycero-3-phosphocholine + CMP + H(+). The enzyme catalyses 1-O-alkyl-2-acyl-sn-glycerol + CDP-choline = a 1-O-alkyl-2-acyl-sn-glycero-3-phosphocholine + CMP + H(+). It catalyses the reaction a 1-O-(1Z-alkenyl)-2-acyl-sn-glycerol + CDP-choline = a 1-O-(1Z-alkenyl)-2-acyl-sn-glycero-3-phosphocholine + CMP + H(+). The catalysed reaction is 1,2-dioctanoyl-sn-glycerol + CDP-choline = 1,2-dioctanoyl-sn-glycero-3-phosphocholine + CMP + H(+). It carries out the reaction 1,2-didecanoyl-sn-glycerol + CDP-choline = 1,2-didecanoyl-sn-glycero-3-phosphocholine + CMP + H(+). The enzyme catalyses CDP-choline + 1,2-di-(9Z-octadecenoyl)-sn-glycerol = 1,2-di-(9Z-octadecenoyl)-sn-glycero-3-phosphocholine + CMP + H(+). It catalyses the reaction 1-hexadecanoyl-2-(9Z-octadecenoyl)-sn-glycerol + CDP-choline = 1-hexadecanoyl-2-(9Z-octadecenoyl)-sn-glycero-3-phosphocholine + CMP + H(+). The catalysed reaction is CDP-ethanolamine + 1,2-di-(9Z-octadecenoyl)-sn-glycerol = 1,2-di-(9Z-octadecenoyl)-sn-glycero-3-phosphoethanolamine + CMP + H(+). It carries out the reaction 1-hexadecanoyl-2-(9Z-octadecenoyl)-sn-glycerol + CDP-ethanolamine = 1-hexadecanoyl-2-(9Z-octadecenoyl)-sn-glycero-3-phosphoethanolamine + CMP + H(+). The enzyme catalyses 1-hexadecanoyl-2-(4Z,7Z,10Z,13Z,16Z,19Z-docosahexaenoyl)-sn-glycerol + CDP-choline = 1-hexadecanoyl-2-(4Z,7Z,10Z,13Z,16Z,19Z-docosahexaenoyl)-sn-glycero-3-phosphocholine + CMP + H(+). It catalyses the reaction 1,2-di-(9Z-hexadecenoyl)-sn-glycerol + CDP-choline = 1,2-di-(9Z-hexadecenoyl)-sn-glycero-3-phosphocholine + CMP + H(+). The catalysed reaction is 1,2-di-(9Z-hexadecenoyl)-sn-glycerol + CDP-ethanolamine = 1,2-di-(9Z-hexadecenoyl)-sn-glycero-3-phosphoethanolamine + CMP + H(+). It carries out the reaction 1-O-hexadecyl-2-acetyl-sn-glycerol + CDP-choline = 1-O-hexadecyl-2-acetyl-sn-glycero-3-phosphocholine + CMP + H(+). The enzyme catalyses 1-O-hexadecyl-2-(5Z,8Z,11Z,14Z-eicosatetraenoyl)-sn-glycerol + CDP-choline = 1-O-hexadecyl-2-(5Z,8Z,11Z,14Z)-eicosatetraenoyl-sn-glycero-3-phosphocholine + CMP + H(+). Its pathway is phospholipid metabolism; phosphatidylethanolamine biosynthesis; phosphatidylethanolamine from ethanolamine: step 3/3. It participates in phospholipid metabolism; phosphatidylcholine biosynthesis; phosphatidylcholine from phosphocholine: step 2/2. Functionally, catalyzes both phosphatidylcholine and phosphatidylethanolamine biosynthesis from CDP-choline and CDP-ethanolamine, respectively. Involved in protein-dependent process of phospholipid transport to distribute phosphatidyl choline to the lumenal surface. Has a higher cholinephosphotransferase activity than ethanolaminephosphotransferase activity. This Rattus norvegicus (Rat) protein is Choline/ethanolaminephosphotransferase 1.